The chain runs to 200 residues: ATP-dependent Clp protease proteolytic subunit (200 aa).

Residue Ser-98 is the Nucleophile of the active site. His-123 is an active-site residue.

Belongs to the peptidase S14 family. In terms of assembly, fourteen ClpP subunits assemble into 2 heptameric rings which stack back to back to give a disk-like structure with a central cavity, resembling the structure of eukaryotic proteasomes.

The protein localises to the cytoplasm. The enzyme catalyses Hydrolysis of proteins to small peptides in the presence of ATP and magnesium. alpha-casein is the usual test substrate. In the absence of ATP, only oligopeptides shorter than five residues are hydrolyzed (such as succinyl-Leu-Tyr-|-NHMec, and Leu-Tyr-Leu-|-Tyr-Trp, in which cleavage of the -Tyr-|-Leu- and -Tyr-|-Trp bonds also occurs).. Functionally, cleaves peptides in various proteins in a process that requires ATP hydrolysis. Has a chymotrypsin-like activity. Plays a major role in the degradation of misfolded proteins. In Deinococcus geothermalis (strain DSM 11300 / CIP 105573 / AG-3a), this protein is ATP-dependent Clp protease proteolytic subunit.